We begin with the raw amino-acid sequence, 122 residues long: Large ribosomal subunit protein uL14 (122 aa).

Belongs to the universal ribosomal protein uL14 family. Part of the 50S ribosomal subunit. Forms a cluster with proteins L3 and L19. In the 70S ribosome, L14 and L19 interact and together make contacts with the 16S rRNA in bridges B5 and B8.

Functionally, binds to 23S rRNA. Forms part of two intersubunit bridges in the 70S ribosome. This chain is Large ribosomal subunit protein uL14, found in Chlamydia trachomatis serovar A (strain ATCC VR-571B / DSM 19440 / HAR-13).